We begin with the raw amino-acid sequence, 132 residues long: Small ribosomal subunit protein uS8 (132 aa).

This sequence belongs to the universal ribosomal protein uS8 family. In terms of assembly, part of the 30S ribosomal subunit. Contacts proteins S5 and S12.

In terms of biological role, one of the primary rRNA binding proteins, it binds directly to 16S rRNA central domain where it helps coordinate assembly of the platform of the 30S subunit. The sequence is that of Small ribosomal subunit protein uS8 from Xanthomonas axonopodis pv. citri (strain 306).